Consider the following 444-residue polypeptide: Phosphatidate cytidylyltransferase 2 (444 aa).

The span at 1 to 38 (MTELRQRVVREDAPPEDKESESEAKLDGETASDSESRA) shows a compositional bias: basic and acidic residues. The tract at residues 1 to 48 (MTELRQRVVREDAPPEDKESESEAKLDGETASDSESRAETAPLPTSVD) is disordered. Ser-20 carries the post-translational modification Phosphoserine. The residue at position 30 (Thr-30) is a Phosphothreonine. Ser-32, Ser-34, and Ser-36 each carry phosphoserine. Thr-50 carries the post-translational modification Phosphothreonine. Transmembrane regions (helical) follow at residues 78–98 (MIAFFFIIIYLGPMVLMMIVM), 129–149 (WYFLLCVNYFFYGETVTDYFF), 165–185 (HRFISFALYLTGFCMFVLSLV), 212–232 (LVIHNLFEGMIWFIVPISCVI), 261–281 (GFIGGFFATVVFGLLLSYVMS), and 339–359 (IALSTFASLIGPFGGFFASGF).

The protein belongs to the CDS family. Homodimer. As to expression, ubiquitous. Expressed in the ganglion cell layer and inner nuclear layer of the retina.

Its subcellular location is the endoplasmic reticulum membrane. It carries out the reaction a 1,2-diacyl-sn-glycero-3-phosphate + CTP + H(+) = a CDP-1,2-diacyl-sn-glycerol + diphosphate. It catalyses the reaction 1-octadecanoyl-2-(5Z,8Z,11Z,14Z-eicosatetraenoyl)-sn-glycero-3-phosphate + CTP + H(+) = 1-octadecanoyl-2-(5Z,8Z,11Z,14Z-eicosatetraenoyl)-sn-glycero-3-cytidine-5'-diphosphate + diphosphate. The enzyme catalyses 1-octadecanoyl-2-(9Z,12Z-octadecadienoyl)-sn-glycero-3-phosphate + CTP + H(+) = 1-octadecanoyl-2-(9Z,12Z-octadecadienoyl)-sn-glycero-3-cytidine-5'-diphosphate + diphosphate. The catalysed reaction is 1-hexadecanoyl-2-(5Z,8Z,11Z,14Z-eicosatetraenoyl)-sn-glycero-3-phosphate + CTP + H(+) = 1-hexadecanoyl-2-(5Z,8Z,11Z,14Z-eicosatetraenoyl)-sn-glycero-3-cytidine-5'-diphosphate + diphosphate. It carries out the reaction 1,2-di-(5Z,8Z,11Z,14Z)-eicosatetraenoyl-sn-glycero-3-phosphate + CTP + H(+) = 1,2-di-(5Z,8Z,11Z,14Z-eicosatetraenoyl)-sn-glycero-3-cytidine-5'-diphosphate + diphosphate. It catalyses the reaction 1-octadecanoyl-2-(9Z-octadecenoyl)-sn-glycero-3-phosphate + CTP + H(+) = 1-octadecanoyl-2-(9Z-octadecenoyl)-sn-glycero-3-cytidine-5'-diphosphate + diphosphate. The enzyme catalyses 1-octadecanoyl-2-(4Z,7Z,10Z,13Z,16Z,19Z-docosahexaenoyl)-sn-glycero-3-phosphate + CTP + H(+) = 1-octadecanoyl-2-(4Z,7Z,10Z,13Z,16Z,19Z-docosahexaenoyl)-sn-glycero-3-cytidine-5'-diphosphate + diphosphate. The catalysed reaction is 1,2-di-(9Z,12Z-octadecadienoyl)-sn-glycero-3-phosphate + CTP + H(+) = 1,2-di-(9Z,12Z-octadecadienoyl)-sn-glycero-3-cytidine-5'-diphosphate + diphosphate. It carries out the reaction 1,2-di-(9Z-octadecenoyl)-sn-glycero-3-phosphate + CTP + H(+) = 1,2-di-(9Z-octadecenoyl)-sn-glycero-3-cytidine-5'-diphosphate + diphosphate. Its pathway is phospholipid metabolism; CDP-diacylglycerol biosynthesis; CDP-diacylglycerol from sn-glycerol 3-phosphate: step 3/3. Catalyzes the conversion of phosphatidic acid (PA) to CDP-diacylglycerol (CDP-DAG), an essential intermediate in the synthesis of phosphatidylglycerol, cardiolipin and phosphatidylinositol. Exhibits specificity for the nature of the acyl chains at the sn-1 and sn-2 positions in the substrate, PA and the preferred acyl chain composition is 1-stearoyl-2-arachidonoyl-sn-phosphatidic acid. Plays an important role in regulating the growth and maturation of lipid droplets which are storage organelles at the center of lipid and energy homeostasis. This chain is Phosphatidate cytidylyltransferase 2, found in Mus musculus (Mouse).